Reading from the N-terminus, the 106-residue chain is UPF0145 protein Csac_0771 (106 aa).

This sequence belongs to the UPF0145 family.

In Caldicellulosiruptor saccharolyticus (strain ATCC 43494 / DSM 8903 / Tp8T 6331), this protein is UPF0145 protein Csac_0771.